The primary structure comprises 240 residues: MPTLGVNIDHVATIRQARQTVEPDPVAAAVLAELAGADGITVHLREDRRHIQERDVHILRQTVQTHLNLEMAPTDEMVAIALEIKPDYITLVPERREEVTTEGGLDVAGNLSQMRKVVAQLQGVGIPVSMFIDPERLQIEASAQIEAKFIELHTGSYAEAKNEATRHKELTILADGCNIAINHGLRVNAGHGLTYENVYSVACLKGMEELNIGHTIVSKAVLVGMERAVREMKLAINGKF.

A 3-amino-2-oxopropyl phosphate-binding site is contributed by asparagine 7. 9 to 10 (DH) lines the 1-deoxy-D-xylulose 5-phosphate pocket. Arginine 18 serves as a coordination point for 3-amino-2-oxopropyl phosphate. Histidine 43 (proton acceptor) is an active-site residue. Positions 45 and 50 each coordinate 1-deoxy-D-xylulose 5-phosphate. Catalysis depends on glutamate 70, which acts as the Proton acceptor. Threonine 100 is a 1-deoxy-D-xylulose 5-phosphate binding site. Histidine 191 serves as the catalytic Proton donor. 3-amino-2-oxopropyl phosphate is bound by residues glycine 192 and 213–214 (GH).

The protein belongs to the PNP synthase family. In terms of assembly, homooctamer; tetramer of dimers.

It is found in the cytoplasm. It carries out the reaction 3-amino-2-oxopropyl phosphate + 1-deoxy-D-xylulose 5-phosphate = pyridoxine 5'-phosphate + phosphate + 2 H2O + H(+). It functions in the pathway cofactor biosynthesis; pyridoxine 5'-phosphate biosynthesis; pyridoxine 5'-phosphate from D-erythrose 4-phosphate: step 5/5. Functionally, catalyzes the complicated ring closure reaction between the two acyclic compounds 1-deoxy-D-xylulose-5-phosphate (DXP) and 3-amino-2-oxopropyl phosphate (1-amino-acetone-3-phosphate or AAP) to form pyridoxine 5'-phosphate (PNP) and inorganic phosphate. The polypeptide is Pyridoxine 5'-phosphate synthase (Trichodesmium erythraeum (strain IMS101)).